A 315-amino-acid polypeptide reads, in one-letter code: MSLSIIFMGTPEFSVPTLRSLIDAGHKIRAVYTQPPRPGGRRGLDLQKSPVHQAAELLGLPVFTPVNFKDQEERQRFRELDADVAVVVAYGLLLPEAILTGTRLGCYNGHASLLPRWRGAAPIQRAIMAGDKKTGMMVMKMDKGLDTGPVALTREVEIGGTMTAGELHDKLMQAGAKAMAEAMNKLEYNELPLTEQPAEGVVYAAKIDKGETRIDFSKPAADVHNHIRGLSPFPGAWFEMEIAGKPERVKVLGSELAEGERAVGEVLSDDLAIACGSGAVRLTKLQKAGGKPMAAADFLRGTPVAAGTILALGPV.

Position 112–115 (112–115 (SLLP)) interacts with (6S)-5,6,7,8-tetrahydrofolate.

Belongs to the Fmt family.

The catalysed reaction is L-methionyl-tRNA(fMet) + (6R)-10-formyltetrahydrofolate = N-formyl-L-methionyl-tRNA(fMet) + (6S)-5,6,7,8-tetrahydrofolate + H(+). Its function is as follows. Attaches a formyl group to the free amino group of methionyl-tRNA(fMet). The formyl group appears to play a dual role in the initiator identity of N-formylmethionyl-tRNA by promoting its recognition by IF2 and preventing the misappropriation of this tRNA by the elongation apparatus. The protein is Methionyl-tRNA formyltransferase of Rhizobium rhizogenes (strain K84 / ATCC BAA-868) (Agrobacterium radiobacter).